Consider the following 454-residue polypeptide: MRSDTREEISAALDAYHASLSRVLDLKCDALTTPELLACLQRLEVERRRQGAAEHALINQLAGQACEEELGGTLRTALANRLHITPGEASRRIAEAEDLGERRALTGEPLPAQLTATAAAQREGKIGREHIKEIQAFFKELSAAVDLGIREAAEAQLAELATSRRPDHLHGLATQLMDWLHPDGNFSDQERARKRGITMGKQEFDGMSRISGLLTPELRATIEAVLAKLAAPGACNPDDQTPLVADTPDADAVRRDTRSQAQRNHDAFLAALRGLLASGELGQHKGLPVTIVVSTTLKELEAATGKGVTGGGSRVPMSDLIRMASHANHYLALFDGAKPLALYHTKRLASPAQRIMLYAKDRGCSRPGCDAPAYHSEVHHVTPWTTTHRTDINDLTLACGPDNRLVEKGWKTRKNAHGDTEWLPPPHLDHGQPRINRYHHPAKILCEQDDDEPH.

One can recognise an HNH domain in the interval 364–405 (CSRPGCDAPAYHSEVHHVTPWTTTHRTDINDLTLACGPDNRL).

This sequence belongs to the Rv1128c/1148c/1588c/1702c/1945/3466 family.

This is an uncharacterized protein from Mycobacterium tuberculosis (strain CDC 1551 / Oshkosh).